A 101-amino-acid chain; its full sequence is Chaperone modulatory protein CbpM (101 aa).

The protein belongs to the CbpM family.

Functionally, interacts with CbpA and inhibits both the DnaJ-like co-chaperone activity and the DNA binding activity of CbpA. Together with CbpA, modulates the activity of the DnaK chaperone system. Does not inhibit the co-chaperone activity of DnaJ. This chain is Chaperone modulatory protein CbpM, found in Pseudomonas putida (strain W619).